The primary structure comprises 77 residues: Conotoxin King-Kong 2 (77 aa).

The signal sequence occupies residues 1 to 22; it reads MKLTCMMIVAVLFLTAWTFVTA. Positions 23-49 are excised as a propeptide; that stretch reads DDSGNGLENLFSKAHHEMKNPEASNLN. Intrachain disulfides connect Cys52-Cys67, Cys59-Cys71, and Cys66-Cys76. Cys76 carries the cysteine amide modification.

This sequence belongs to the conotoxin O1 superfamily. Expressed by the venom duct.

Its subcellular location is the secreted. This Conus textile (Cloth-of-gold cone) protein is Conotoxin King-Kong 2.